Here is a 244-residue protein sequence, read N- to C-terminus: Protein TIFY 10b (244 aa).

The Tify domain maps to 97–132 (QEPEKRQLTIFYGGKVLVFNDFPADKAKGLMQLASK). The Jas signature appears at 185-210 (PIARKASLHRFLEKRKDRLNAKTPYQ). A Nuclear localization signal motif is present at residues 187–194 (ARKASLHR). Positions 193–244 (HRFLEKRKDRLNAKTPYQASPSDATPVKKEPESQPWLGLGPNAVVKPIERGQ) are disordered. The span at 194-204 (RFLEKRKDRLN) shows a compositional bias: basic and acidic residues.

This sequence belongs to the TIFY/JAZ family. Ubiquitinated. Targeted for degradation by the SCF(COI1) E3 ubiquitin ligase-proteasome pathway during jasmonate signaling.

The protein resides in the nucleus. Its function is as follows. Repressor of jasmonate responses. The chain is Protein TIFY 10b from Oryza sativa subsp. indica (Rice).